A 122-amino-acid polypeptide reads, in one-letter code: Large ribosomal subunit protein uL14 (122 aa).

It belongs to the universal ribosomal protein uL14 family. As to quaternary structure, part of the 50S ribosomal subunit. Forms a cluster with proteins L3 and L19. In the 70S ribosome, L14 and L19 interact and together make contacts with the 16S rRNA in bridges B5 and B8.

Binds to 23S rRNA. Forms part of two intersubunit bridges in the 70S ribosome. This Protochlamydia amoebophila (strain UWE25) protein is Large ribosomal subunit protein uL14.